A 250-amino-acid chain; its full sequence is Putative inactive flavonol synthase 2 (250 aa).

Residues 171–250 form the Fe2OG dioxygenase domain; that stretch reads TEYVMRINNY…EQWKVQECVA (80 aa). Residues His195 and Asp197 each coordinate Fe cation.

The protein belongs to the iron/ascorbate-dependent oxidoreductase family.

In Arabidopsis thaliana (Mouse-ear cress), this protein is Putative inactive flavonol synthase 2 (FLS2).